The sequence spans 359 residues: MITLDLILPDTRYPIHIGHGLLEQVDLLLPHLPLPKAAIVSNATVAPLYLQRLQQALEARGVACSSVVLPDGEQHKDWQTLNLIFDALLSGNAERKTTLIALGGGVIGDMTGFAAACYQRGAPFIQIPTTLLAQVDSSVGGKTAINHPLGKNMIGAFYQPKAVIADMELLATLPDRELSAGLAEVIKYGLLGDAGFLAWLEANMAKLRARDGDALQYAVKRSCEMKAAIVAEDEKENGVRALLNLGHTFGHAIEAGMGYGAWLHGEAVAAGMVLAAAASAELGWIGRDEAERVRRLIAAAGLPVKAPSMPTEQWLNLMSHDKKVEAGTVRFVLLRELGQAVIKSGLDTALLDKILRENS.

NAD(+) contacts are provided by residues 71–76 (DGEQHK), 105–109 (GVIGD), 129–130 (TT), lysine 142, and lysine 151. The Zn(2+) site is built by glutamate 184, histidine 247, and histidine 264.

It belongs to the sugar phosphate cyclases superfamily. Dehydroquinate synthase family. It depends on NAD(+) as a cofactor. Requires Co(2+) as cofactor. Zn(2+) serves as cofactor.

It is found in the cytoplasm. It carries out the reaction 7-phospho-2-dehydro-3-deoxy-D-arabino-heptonate = 3-dehydroquinate + phosphate. It functions in the pathway metabolic intermediate biosynthesis; chorismate biosynthesis; chorismate from D-erythrose 4-phosphate and phosphoenolpyruvate: step 2/7. In terms of biological role, catalyzes the conversion of 3-deoxy-D-arabino-heptulosonate 7-phosphate (DAHP) to dehydroquinate (DHQ). The sequence is that of 3-dehydroquinate synthase from Chromobacterium violaceum (strain ATCC 12472 / DSM 30191 / JCM 1249 / CCUG 213 / NBRC 12614 / NCIMB 9131 / NCTC 9757 / MK).